We begin with the raw amino-acid sequence, 158 residues long: SKP1-like protein 18 (158 aa).

The interval 99 to 157 (ILAANYLNFEGLLGFASQTVADYIKDKTPEEVREIFNIENDFTPEEEEEIRKENAWTFN) is interaction with the F-box domain of F-box proteins.

This sequence belongs to the SKP1 family. As to quaternary structure, part of a SCF (SKP1-cullin-F-box) protein ligase complex. Interacts with CPR1/CPR30, EBF1, SKP2A, At3g61590, At4g38940 and At5g49610. In terms of tissue distribution, expressed in young seedlings, roots, leaves, floral stems, inflorescences, pollen, and siliques.

Its subcellular location is the nucleus. Its pathway is protein modification; protein ubiquitination. In terms of biological role, involved in ubiquitination and subsequent proteasomal degradation of target proteins. Together with CUL1, RBX1 and a F-box protein, it forms a SCF E3 ubiquitin ligase complex. The functional specificity of this complex depends on the type of F-box protein. In the SCF complex, it serves as an adapter that links the F-box protein to CUL1. This is SKP1-like protein 18 (ASK18) from Arabidopsis thaliana (Mouse-ear cress).